A 301-amino-acid polypeptide reads, in one-letter code: Retinochrome (301 aa).

Residues 1–17 (MFGNPAMTGLHQFTMWE) are Extracellular-facing. Residues 18 to 43 (HYFTGSIYLVLGCVVFSLCGMCIIFL) form a helical membrane-spanning segment. Topologically, residues 44-54 (ARQSPKPRRKY) are cytoplasmic. The helical transmembrane segment at 55–76 (AILIHVLITAMAVNGGDPAHAS) threads the bilayer. Residues 77-94 (SSIVGRWLYGSVGCQLMG) lie on the Extracellular side of the membrane. The helical transmembrane segment at 95–120 (FWGFFGGMSHIWMLFAFAMERYMAVC) threads the bilayer. Residues 121–132 (HREFYQQMPSVY) are Cytoplasmic-facing. A helical membrane pass occupies residues 133 to 153 (YSIIVGLMYTFGTFWATMPLL). Over 154–180 (GWASYGLEVHGTSCTINYSVSDESYQS) the chain is Extracellular. An N-linked (GlcNAc...) asparagine glycan is attached at Asn170. A helical membrane pass occupies residues 181-208 (YVFFLAIFSFIFPMVSGWYAISKAWSGL). Residues 209-230 (SAIPDAEKEKDKDILSEEQLTA) are Cytoplasmic-facing. A helical membrane pass occupies residues 231-255 (LAGAFILISLISWSGFGYVAIYSAL). Topologically, residues 256–264 (THGGAQLSH) are extracellular. A helical transmembrane segment spans residues 265-289 (LRGHVPPIMSKTGCALFPLLIFLLT). Lys275 bears the N6-(retinylidene)lysine mark. Residues 290 to 301 (ARSLPKSDTKKP) lie on the Cytoplasmic side of the membrane.

Belongs to the G-protein coupled receptor 1 family. Opsin subfamily. In terms of tissue distribution, mainly stored in myeloid bodies of the inner segments.

The protein localises to the membrane. Retinochrome is capable of acting as an effective catalyst in the light to convert various isomers of retinal into 11-cis, the form that is required by opsin to resynthesize rhodopsin. The sequence is that of Retinochrome from Todarodes pacificus (Japanese flying squid).